The following is a 332-amino-acid chain: Glycerol-3-phosphate dehydrogenase [NAD(P)+] (332 aa).

The NADPH site is built by serine 11, phenylalanine 12, lysine 32, and lysine 106. Lysine 106, glycine 137, and serine 139 together coordinate sn-glycerol 3-phosphate. Alanine 141 contributes to the NADPH binding site. Residues lysine 192, aspartate 245, serine 255, arginine 256, and asparagine 257 each coordinate sn-glycerol 3-phosphate. The active-site Proton acceptor is the lysine 192. Position 256 (arginine 256) interacts with NADPH. 2 residues coordinate NADPH: valine 280 and glutamate 282.

The protein belongs to the NAD-dependent glycerol-3-phosphate dehydrogenase family.

It is found in the cytoplasm. The catalysed reaction is sn-glycerol 3-phosphate + NAD(+) = dihydroxyacetone phosphate + NADH + H(+). It carries out the reaction sn-glycerol 3-phosphate + NADP(+) = dihydroxyacetone phosphate + NADPH + H(+). The protein operates within membrane lipid metabolism; glycerophospholipid metabolism. In terms of biological role, catalyzes the reduction of the glycolytic intermediate dihydroxyacetone phosphate (DHAP) to sn-glycerol 3-phosphate (G3P), the key precursor for phospholipid synthesis. The sequence is that of Glycerol-3-phosphate dehydrogenase [NAD(P)+] from Staphylococcus aureus (strain bovine RF122 / ET3-1).